The following is a 453-amino-acid chain: Plasmepsin II (453 aa).

Residues 1 to 37 (MDITVREHDFKHGFIKSNSTFDGLNIDNSKNKKKIQK) are Cytoplasmic-facing. The propeptide occupies 1–124 (MDITVREHDF…SGLTKTNYLG (124 aa)). Residues 38–58 (GFQILYVLLFCSVMCGLFYYV) traverse the membrane as a helical; Signal-anchor for type II membrane protein segment. Over 59 to 453 (YENVWLQRDN…VGIALAKKNL (395 aa)) the chain is Lumenal. In terms of domain architecture, Peptidase A1 spans 140 to 447 (FYGDAEVGDN…DYDNQSVGIA (308 aa)). Asp-158 is an active-site residue. The cysteines at positions 171 and 176 are disulfide-linked. The active site involves Asp-338. A disulfide bridge connects residues Cys-373 and Cys-409.

This sequence belongs to the peptidase A1 family. As to quaternary structure, component of the hemozoin formation complex (HFC) composed of falcipains FP2A and/or FP2B, plasmepsins PMII, PMIII/HAP and PMIV, heme detoxifying protein HDP and falcilysin FLN. The HFC complex is involved in hemoglobin degradation and detoxification of heme in the food vacuole during the asexual blood stage. Post-translationally, not N-glycosylated. In terms of processing, proteolytically cleaved into the soluble active mature form in the digestive vacuole by cysteine protease falcipains; the process begins at the early ring stage. Proteolysis requires an acidic environment. In absence of falcipains, autoprocessing may serve as an alternate activation system.

It is found in the membrane. The protein localises to the vacuole lumen. It localises to the vacuole membrane. The catalysed reaction is Hydrolysis of the bonds linking certain hydrophobic residues in hemoglobin or globin. Also cleaves small molecules substrates such as Ala-Leu-Glu-Arg-Thr-Phe-|-Phe(NO2)-Ser-Phe-Pro-Thr.. With respect to regulation, inhibited by pepstatin A. Inhibited by KNI derived compounds (KNI-10742, 10743, 10395, 10333, and 10343). In terms of biological role, during the asexual blood stage, participates in initial cleavage of native host hemoglobin (Hb) resulting in Hb denaturation. May cleave preferentially denatured hemoglobin that has been cleaved by PMI. Digestion of host Hb is an essential step which provides the parasite with amino acids for protein synthesis, and regulates osmolarity. In Plasmodium falciparum (isolate 3D7), this protein is Plasmepsin II.